A 349-amino-acid polypeptide reads, in one-letter code: Putative nuclease HARBI1 (349 aa).

4 residues coordinate a divalent metal cation: aspartate 149, aspartate 199, aspartate 225, and glutamate 261. A DDE Tnp4 domain is found at aspartate 149–asparagine 300.

It belongs to the HARBI1 family. As to quaternary structure, interacts with NAIF1. Requires a divalent metal cation as cofactor. Detected in adult brain, eye, nerve tissue and lung. Detected in embryo.

Its subcellular location is the nucleus. The protein localises to the cytoplasm. Transposase-derived protein that may have nuclease activity (Potential). Does not have transposase activity. This chain is Putative nuclease HARBI1 (Harbi1), found in Mus musculus (Mouse).